A 470-amino-acid chain; its full sequence is Uronate isomerase (470 aa).

Belongs to the metallo-dependent hydrolases superfamily. Uronate isomerase family.

The enzyme catalyses D-glucuronate = D-fructuronate. It carries out the reaction aldehydo-D-galacturonate = keto-D-tagaturonate. It participates in carbohydrate metabolism; pentose and glucuronate interconversion. This chain is Uronate isomerase, found in Vibrio parahaemolyticus serotype O3:K6 (strain RIMD 2210633).